A 174-amino-acid chain; its full sequence is Nucleoside-triphosphatase THEP1 (174 aa).

ATP-binding positions include 7–14 (GRPGVGKT) and 94–101 (LIIVDEIG).

Belongs to the THEP1 NTPase family.

It catalyses the reaction a ribonucleoside 5'-triphosphate + H2O = a ribonucleoside 5'-diphosphate + phosphate + H(+). Its function is as follows. Has nucleotide phosphatase activity towards ATP, GTP, CTP, TTP and UTP. May hydrolyze nucleoside diphosphates with lower efficiency. This is Nucleoside-triphosphatase THEP1 from Thermotoga maritima (strain ATCC 43589 / DSM 3109 / JCM 10099 / NBRC 100826 / MSB8).